The chain runs to 89 residues: Small ribosomal subunit protein uS15 (89 aa).

Belongs to the universal ribosomal protein uS15 family. As to quaternary structure, part of the 30S ribosomal subunit. Forms a bridge to the 50S subunit in the 70S ribosome, contacting the 23S rRNA.

In terms of biological role, one of the primary rRNA binding proteins, it binds directly to 16S rRNA where it helps nucleate assembly of the platform of the 30S subunit by binding and bridging several RNA helices of the 16S rRNA. Forms an intersubunit bridge (bridge B4) with the 23S rRNA of the 50S subunit in the ribosome. This Protochlamydia amoebophila (strain UWE25) protein is Small ribosomal subunit protein uS15.